Reading from the N-terminus, the 192-residue chain is Phosphoheptose isomerase (192 aa).

The SIS domain maps to 37 to 192 (LADSFKAGGK…IQLIEKEMVK (156 aa)). 52-54 (NGG) contacts substrate. 2 residues coordinate Zn(2+): histidine 61 and glutamate 65. Substrate-binding positions include glutamate 65, 93–94 (ND), 119–121 (STS), serine 124, and glutamine 172. Zn(2+)-binding residues include glutamine 172 and histidine 180.

This sequence belongs to the SIS family. GmhA subfamily. Homotetramer. Zn(2+) is required as a cofactor.

The protein resides in the cytoplasm. It carries out the reaction 2 D-sedoheptulose 7-phosphate = D-glycero-alpha-D-manno-heptose 7-phosphate + D-glycero-beta-D-manno-heptose 7-phosphate. It participates in carbohydrate biosynthesis; D-glycero-D-manno-heptose 7-phosphate biosynthesis; D-glycero-alpha-D-manno-heptose 7-phosphate and D-glycero-beta-D-manno-heptose 7-phosphate from sedoheptulose 7-phosphate: step 1/1. Its function is as follows. Catalyzes the isomerization of sedoheptulose 7-phosphate in D-glycero-D-manno-heptose 7-phosphate. This Shigella dysenteriae serotype 1 (strain Sd197) protein is Phosphoheptose isomerase.